The following is a 182-amino-acid chain: Small ribosomal subunit protein uS4c (182 aa).

The S4 RNA-binding domain occupies 82 to 143; it reads MRLDNILFRL…KERSKVLIQN (62 aa).

The protein belongs to the universal ribosomal protein uS4 family. As to quaternary structure, part of the 30S ribosomal subunit. Contacts protein S5. The interaction surface between S4 and S5 is involved in control of translational fidelity.

The protein resides in the plastid. The protein localises to the chloroplast. In terms of biological role, one of the primary rRNA binding proteins, it binds directly to 16S rRNA where it nucleates assembly of the body of the 30S subunit. With S5 and S12 plays an important role in translational accuracy. In Neomarica sp. (strain Lejeune 1997), this protein is Small ribosomal subunit protein uS4c (rps4).